The sequence spans 99 residues: Protein RnfH (99 aa).

This sequence belongs to the UPF0125 (RnfH) family.

In Buchnera aphidicola subsp. Acyrthosiphon pisum (strain 5A), this protein is Protein RnfH.